We begin with the raw amino-acid sequence, 585 residues long: Probable phosphoglucomutase, cytoplasmic 2 (585 aa).

The interval 1–20 (MVSFKVSLVSTSPIDGQKPG) is disordered. Alpha-D-glucose 1,6-bisphosphate is bound by residues Arg25 and Ser124. The active-site Phosphoserine intermediate is the Ser124. Residues Ser124, Asp301, Asp303, and Asp305 each coordinate Mg(2+). At Ser124 the chain carries Phosphoserine. Alpha-D-glucose 1,6-bisphosphate contacts are provided by Asp305, Arg306, Thr369, Glu388, Ser390, and Lys401.

This sequence belongs to the phosphohexose mutase family. In terms of assembly, monomer. It depends on Mg(2+) as a cofactor.

Its subcellular location is the cytoplasm. It carries out the reaction alpha-D-glucose 1-phosphate = alpha-D-glucose 6-phosphate. The catalysed reaction is O-phospho-L-seryl-[protein] + alpha-D-glucose 1-phosphate = alpha-D-glucose 1,6-bisphosphate + L-seryl-[protein]. It catalyses the reaction alpha-D-glucose 1,6-bisphosphate + L-seryl-[protein] = O-phospho-L-seryl-[protein] + alpha-D-glucose 6-phosphate. Its function is as follows. Catalyzes the reversible isomerization of alpha-D-glucose 1-phosphate to alpha-D-glucose 6-phosphate. The mechanism proceeds via the intermediate compound alpha-D-glucose 1,6-bisphosphate. This enzyme participates in both the breakdown and synthesis of glucose. This Arabidopsis thaliana (Mouse-ear cress) protein is Probable phosphoglucomutase, cytoplasmic 2.